Here is a 178-residue protein sequence, read N- to C-terminus: Crossover junction endodeoxyribonuclease RuvC (178 aa).

Residues aspartate 7, glutamate 67, and aspartate 139 contribute to the active site. Aspartate 7, glutamate 67, and aspartate 139 together coordinate Mg(2+).

This sequence belongs to the RuvC family. As to quaternary structure, homodimer which binds Holliday junction (HJ) DNA. The HJ becomes 2-fold symmetrical on binding to RuvC with unstacked arms; it has a different conformation from HJ DNA in complex with RuvA. In the full resolvosome a probable DNA-RuvA(4)-RuvB(12)-RuvC(2) complex forms which resolves the HJ. It depends on Mg(2+) as a cofactor.

It is found in the cytoplasm. It catalyses the reaction Endonucleolytic cleavage at a junction such as a reciprocal single-stranded crossover between two homologous DNA duplexes (Holliday junction).. Its function is as follows. The RuvA-RuvB-RuvC complex processes Holliday junction (HJ) DNA during genetic recombination and DNA repair. Endonuclease that resolves HJ intermediates. Cleaves cruciform DNA by making single-stranded nicks across the HJ at symmetrical positions within the homologous arms, yielding a 5'-phosphate and a 3'-hydroxyl group; requires a central core of homology in the junction. The consensus cleavage sequence is 5'-(A/T)TT(C/G)-3'. Cleavage occurs on the 3'-side of the TT dinucleotide at the point of strand exchange. HJ branch migration catalyzed by RuvA-RuvB allows RuvC to scan DNA until it finds its consensus sequence, where it cleaves and resolves the cruciform DNA. This chain is Crossover junction endodeoxyribonuclease RuvC, found in Trichlorobacter lovleyi (strain ATCC BAA-1151 / DSM 17278 / SZ) (Geobacter lovleyi).